We begin with the raw amino-acid sequence, 150 residues long: Snake venom vascular endothelial growth factor toxin barietin (150 aa).

A signal peptide spans 1-24; that stretch reads MAAYLLAVAILFCIQGWPSGTVQG. Glu-25 carries the pyrrolidone carboxylic acid (Glu) modification. 3 disulfide bridges follow: Cys-38–Cys-80, Cys-69–Cys-115, and Cys-73–Cys-117. A disordered region spans residues 119–150; that stretch reads PRSGSRVNIGKHKRSPEEGEREPSSPLTPGSL. The propeptide occupies 122-150; the sequence is GSRVNIGKHKRSPEEGEREPSSPLTPGSL.

This sequence belongs to the PDGF/VEGF growth factor family. Snake venom VEGF subfamily. As to quaternary structure, homodimer; disulfide-linked. Interacts with high affinity with VEGF receptor-2 (KDR), and with a lower affinity with VEGF receptor-1 (FLT1). Does not bind VEGF receptor-3 (FLT4) and neuropilin-1 (NRP1). In terms of tissue distribution, expressed by the venom gland.

It localises to the secreted. Snake venom VEGFs that may contribute to venom dispersion and prey subjugation by inducing vascular permeability and hypotension. This protein induces an increase in capillary permeability after intradermal injection, as well as a drastic hypotensive effect after intravenous injection. The hypotension is mediated by nitric oxide (NO), which is produced by VEGF-activated endothelium NO synthase. Also induces angiogenesis in vitro, probably through VEGF receptor (KDR/VEGFR-2) signaling. The chain is Snake venom vascular endothelial growth factor toxin barietin from Bitis arietans (African puff adder).